The chain runs to 494 residues: Membrane-bound lytic murein transglycosylase F (494 aa).

A signal peptide spans 1–20; the sequence is MIKYLYVILLGLLLSGCQPA. Positions 21 to 259 are non-LT domain; that stretch reads EVVEIEASPK…HLNEKYFGHV (239 aa). The LT domain stretch occupies residues 260–494; the sequence is KRFDYVDTRA…LKPKLGAGQP (235 aa). Residue E304 is part of the active site. Polar residues predominate over residues 473 to 485; it reads QSLASDSKTNNTL. Positions 473 to 494 are disordered; it reads QSLASDSKTNNTLKPKLGAGQP.

This sequence in the N-terminal section; belongs to the bacterial solute-binding protein 3 family. It in the C-terminal section; belongs to the transglycosylase Slt family.

The protein resides in the cell outer membrane. It catalyses the reaction Exolytic cleavage of the (1-&gt;4)-beta-glycosidic linkage between N-acetylmuramic acid (MurNAc) and N-acetylglucosamine (GlcNAc) residues in peptidoglycan, from either the reducing or the non-reducing ends of the peptidoglycan chains, with concomitant formation of a 1,6-anhydrobond in the MurNAc residue.. Murein-degrading enzyme that degrades murein glycan strands and insoluble, high-molecular weight murein sacculi, with the concomitant formation of a 1,6-anhydromuramoyl product. Lytic transglycosylases (LTs) play an integral role in the metabolism of the peptidoglycan (PG) sacculus. Their lytic action creates space within the PG sacculus to allow for its expansion as well as for the insertion of various structures such as secretion systems and flagella. The protein is Membrane-bound lytic murein transglycosylase F of Shewanella denitrificans (strain OS217 / ATCC BAA-1090 / DSM 15013).